The following is a 395-amino-acid chain: Succinyl-diaminopimelate desuccinylase (395 aa).

Histidine 81 lines the Zn(2+) pocket. The active site involves aspartate 83. Aspartate 114 is a Zn(2+) binding site. Glutamate 146 serves as the catalytic Proton acceptor. Residues glutamate 147, glutamate 175, and histidine 364 each coordinate Zn(2+).

The protein belongs to the peptidase M20A family. DapE subfamily. In terms of assembly, homodimer. Requires Zn(2+) as cofactor. It depends on Co(2+) as a cofactor.

The enzyme catalyses N-succinyl-(2S,6S)-2,6-diaminopimelate + H2O = (2S,6S)-2,6-diaminopimelate + succinate. The protein operates within amino-acid biosynthesis; L-lysine biosynthesis via DAP pathway; LL-2,6-diaminopimelate from (S)-tetrahydrodipicolinate (succinylase route): step 3/3. Functionally, catalyzes the hydrolysis of N-succinyl-L,L-diaminopimelic acid (SDAP), forming succinate and LL-2,6-diaminopimelate (DAP), an intermediate involved in the bacterial biosynthesis of lysine and meso-diaminopimelic acid, an essential component of bacterial cell walls. In Parvibaculum lavamentivorans (strain DS-1 / DSM 13023 / NCIMB 13966), this protein is Succinyl-diaminopimelate desuccinylase.